The sequence spans 434 residues: Iron transporter MagA (434 aa).

Transmembrane regions (helical) follow at residues proline 6–threonine 26, proline 31–valine 51, alanine 56–leucine 76, lysine 86–leucine 106, serine 113–isoleucine 133, leucine 176–tryptophan 196, serine 269–tryptophan 289, threonine 294–leucine 314, tryptophan 321–leucine 341, and lysine 357–methionine 377.

It belongs to the monovalent cation:proton antiporter 2 (CPA2) transporter (TC 2.A.37) family.

The protein resides in the membrane. Iron transporter, which is required for the synthesis of bacterial magnetic particles (BMPs). Probably involved in the transport of iron from the environment into the cytoplasm across the cell membrane, and then from the cytoplasm into the BMP lipid vesicle across the BMP membrane. The protein is Iron transporter MagA (magA) of Paramagnetospirillum magneticum (strain ATCC 700264 / AMB-1) (Magnetospirillum magneticum).